The sequence spans 305 residues: tRNA pseudouridine synthase B (305 aa).

Asp41 functions as the Nucleophile in the catalytic mechanism.

The protein belongs to the pseudouridine synthase TruB family. Type 1 subfamily.

It carries out the reaction uridine(55) in tRNA = pseudouridine(55) in tRNA. Functionally, responsible for synthesis of pseudouridine from uracil-55 in the psi GC loop of transfer RNAs. This chain is tRNA pseudouridine synthase B, found in Prochlorococcus marinus (strain MIT 9515).